The primary structure comprises 112 residues: Protein ORF3 (112 aa).

Hydrophobic regions lie at residues 7-23 (ALGLFCFCSSCFCLCCP) and 40-60 (AAVVSGVTGLILSPSPSPIFI). An interaction with host HPX region spans residues 28-66 (VSRLAVAAGKRGAAVVSGVTGLILSPSPSPIFIQPTPSH). Positions 70-112 (QPPPGLELALGSQSVHSAPLGVTSPSAPPLPPVVDLPQLGLRR) are homodimerization, and interaction with host AMBP/bikunin. The tract at residues 89–112 (LGVTSPSAPPLPPVVDLPQLGLRR) is disordered. Positions 93 to 102 (SPSAPPLPPV) are interaction with host SRC, HCK, FYN, PIK3R3 and GRB2. The PTAP/PSAP motif signature appears at 94–97 (PSAP).

This sequence belongs to the hepevirus ORF3 protein family. Forms homooligomers. Interacts with host SRC, HCK, FYN, PIK3R3 and GRB2 (via SH3 domain); binding does not activate the kinases. Interacts with host AMBP/bikunin and AMBP/alpha-1-microglobulin peptides. Interacts with host HPX/hemopexin. Interacts (when phosphorylated) with capsid protein ORF2. Interacts with host TSG101; this interaction plays a role in viral release from the host cell. Interacts with host SIRPA; this interaction down-regulates the phosphorylation of host IRF3. In terms of processing, palmitoylated in the N-terminus.

It localises to the host endoplasmic reticulum membrane. Its subcellular location is the host cytoplasm. The protein localises to the host cytoskeleton. The protein resides in the virion. It is found in the host cell membrane. Its function is as follows. Small multifunctional phosphoprotein involved in virion morphogenesis, egress and counteracting host innate immunity. Plays critical roles in the final steps of viral release by interacting with host TSG101, a member of the vacuolar protein-sorting pathway and using other cellular host proteins involved in vesicle formation pathway. Also acts as a viroporin and forms ion conductive pores allowing viral particle release. Impairs the generation of type I interferon by down-regulating host TLR3 and TLR7 as well as their downstream signaling pathways. Down-regulates the phosphorylation of host IRF3 via the interaction with host SIRP-alpha, thereby inhibiting IFN-I expression. Interacts with host microtubules. This is Protein ORF3 from Bandicota bengalensis (lesser bandicoot rat).